The chain runs to 103 residues: Flagellar hook-basal body complex protein FliE (103 aa).

Belongs to the FliE family.

It localises to the bacterial flagellum basal body. In Yersinia pestis, this protein is Flagellar hook-basal body complex protein FliE.